The sequence spans 204 residues: 3-dehydroquinate dehydratase (204 aa).

3-dehydroquinate-binding positions include S9, 30–32 (ELR), and R57. The active-site Proton donor/acceptor is the H108. K133 serves as the catalytic Schiff-base intermediate with substrate. 3-dehydroquinate contacts are provided by R167, T186, and Q190.

It belongs to the type-I 3-dehydroquinase family. Homodimer.

The enzyme catalyses 3-dehydroquinate = 3-dehydroshikimate + H2O. It participates in metabolic intermediate biosynthesis; chorismate biosynthesis; chorismate from D-erythrose 4-phosphate and phosphoenolpyruvate: step 3/7. Involved in the third step of the chorismate pathway, which leads to the biosynthesis of aromatic amino acids. Catalyzes the cis-dehydration of 3-dehydroquinate (DHQ) and introduces the first double bond of the aromatic ring to yield 3-dehydroshikimate. This is 3-dehydroquinate dehydratase from Metallosphaera sedula (strain ATCC 51363 / DSM 5348 / JCM 9185 / NBRC 15509 / TH2).